The sequence spans 174 residues: Ribosome rescue factor SmrB (174 aa).

Residues 96-171 (LDLHGLTQQQ…GDAAILVLIE (76 aa)) form the Smr domain.

Belongs to the SmrB family. Associates with collided ribosomes, but not with correctly translating polysomes.

Its function is as follows. Acts as a ribosome collision sensor. Detects stalled/collided disomes (pairs of ribosomes where the leading ribosome is stalled and a second ribosome has collided with it) and endonucleolytically cleaves mRNA at the 5' boundary of the stalled ribosome. Stalled/collided disomes form a new interface (primarily via the 30S subunits) that binds SmrB. Cleaved mRNA becomes available for tmRNA ligation, leading to ribosomal subunit dissociation and rescue of stalled ribosomes. The protein is Ribosome rescue factor SmrB of Tolumonas auensis (strain DSM 9187 / NBRC 110442 / TA 4).